We begin with the raw amino-acid sequence, 454 residues long: Tumor necrosis factor receptor superfamily member 1A (454 aa).

Residues methionine 1 to glycine 29 form the signal peptide. At leucine 30–alanine 212 the chain is on the extracellular side. TNFR-Cys repeat units follow at residues leucine 43 to arginine 82, glutamate 83 to cysteine 125, glycine 126 to cysteine 166, and asparagine 167 to leucine 196. 12 disulfides stabilise this stretch: cysteine 44–cysteine 58, cysteine 59–cysteine 72, cysteine 62–cysteine 81, cysteine 84–cysteine 99, cysteine 102–cysteine 117, cysteine 105–cysteine 125, cysteine 127–cysteine 143, cysteine 146–cysteine 158, cysteine 149–cysteine 166, cysteine 168–cysteine 179, cysteine 182–cysteine 195, and cysteine 185–cysteine 191. Asparagine 54 carries an N-linked (GlcNAc...) asparagine glycan. N-linked (GlcNAc...) asparagine glycosylation occurs at asparagine 151. An N-linked (GlcNAc...) asparagine glycan is attached at asparagine 202. A helical membrane pass occupies residues valine 213 to cysteine 235. The Cytoplasmic portion of the chain corresponds to arginine 236–arginine 454. The segment at valine 339 to glutamine 349 is N-SMase activation domain (NSD). The Death domain occupies leucine 356–leucine 441. (Microbial infection) N-beta-linked (GlcNAc) arginine glycosylation is present at arginine 376.

Binding of TNF to the extracellular domain leads to homotrimerization. The aggregated death domains provide a novel molecular interface that interacts specifically with the death domain of TRADD. Various TRADD-interacting proteins such as TRAFS, RIPK1 and possibly FADD, are recruited to the complex by their association with TRADD. This complex activates at least two distinct signaling cascades, apoptosis and NF-kappa-B signaling. Interacts with BAG4, BABAM2, FEM1B, GRB2, SQSTM1 and TRPC4AP. Interacts with DAB2IP. Interacts directly with NOL3 (via CARD domain); inhibits TNF-signaling pathway. Interacts with SH3RF2, TRADD and RIPK1. SH3RF2 facilitates the recruitment of RIPK1 and TRADD to TNFRSF1A in a TNF-alpha-dependent process. Interacts with PGLYRP1; this interaction is important for cell death induction. Interacts (via death domain) with MADD (via death domain). Post-translationally, (Microbial infection) Glycosylated at Arg-376 by S.typhimurium protein Ssek3: arginine GlcNAcylation prevents homotypic/heterotypic death domain interactions.

Its subcellular location is the cell membrane. The protein localises to the golgi apparatus membrane. Receptor for TNFSF2/TNF-alpha and homotrimeric TNFSF1/lymphotoxin-alpha. The adapter molecule FADD recruits caspase-8 to the activated receptor. The resulting death-inducing signaling complex (DISC) performs caspase-8 proteolytic activation which initiates the subsequent cascade of caspases (aspartate-specific cysteine proteases) mediating apoptosis. This Mus musculus (Mouse) protein is Tumor necrosis factor receptor superfamily member 1A (Tnfrsf1a).